A 90-amino-acid polypeptide reads, in one-letter code: Small ribosomal subunit protein uS15 (90 aa).

It belongs to the universal ribosomal protein uS15 family. In terms of assembly, part of the 30S ribosomal subunit. Forms a bridge to the 50S subunit in the 70S ribosome, contacting the 23S rRNA.

One of the primary rRNA binding proteins, it binds directly to 16S rRNA where it helps nucleate assembly of the platform of the 30S subunit by binding and bridging several RNA helices of the 16S rRNA. Its function is as follows. Forms an intersubunit bridge (bridge B4) with the 23S rRNA of the 50S subunit in the ribosome. In Thermotoga maritima (strain ATCC 43589 / DSM 3109 / JCM 10099 / NBRC 100826 / MSB8), this protein is Small ribosomal subunit protein uS15.